The primary structure comprises 829 residues: Trimethylamine-N-oxide reductase (829 aa).

Positions 1–31 (MNRRDFLKGIASSSFVVLGGSSVLTPLNALA) form a signal peptide, tat-type signal. Residue serine 180 participates in Mo-bis(molybdopterin guanine dinucleotide) binding.

It belongs to the prokaryotic molybdopterin-containing oxidoreductase family. Mo-bis(molybdopterin guanine dinucleotide) serves as cofactor. Predicted to be exported by the Tat system. The position of the signal peptide cleavage has been experimentally proven.

It localises to the periplasm. It catalyses the reaction trimethylamine + 2 Fe(III)-[cytochrome c] + H2O = trimethylamine N-oxide + 2 Fe(II)-[cytochrome c] + 3 H(+). Its function is as follows. Reduces trimethylamine-N-oxide (TMAO) into trimethylamine; an anaerobic reaction coupled to energy-yielding reactions. The protein is Trimethylamine-N-oxide reductase (torA) of Shewanella massilia.